The following is an 857-amino-acid chain: Envelope glycoprotein B (857 aa).

An N-terminal signal peptide occupies residues 1–21; it reads MTRRRVLSVVVLLAALACRLG. Over 22-732 the chain is Virion surface; sequence AQTPEQPAPP…SGFISFFKNP (711 aa). 5 cysteine pairs are disulfide-bonded: C51–C528, C68–C484, C141–C206, C295–C342, and C551–C588. The N-linked (GlcNAc...) asparagine; by host glycan is linked to N76. The involved in fusion and/or binding to host membrane stretch occupies residues 108-114; sequence IYNGWYA. The N-linked (GlcNAc...) asparagine; by host glycan is linked to N163. An involved in fusion and/or binding to host membrane region spans residues 192–200; sequence GWLIWTYRT. N-linked (GlcNAc...) asparagine; by host glycosylation is found at N290, N329, N348, and N395. The disordered stretch occupies residues 398-453; that stretch reads ELTTPTSSPPSSPSPPAPSAARGSTPAAVLRRRRRDAGNATTPVPPTAPGKSLGTL. Pro residues predominate over residues 404–415; it reads SSPPSSPSPPAP. The segment covering 416–425 has biased composition (low complexity); sequence SAARGSTPAA. N-linked (GlcNAc...) asparagine; by host glycosylation is found at N436, N563, and N629. An oligomerization region spans residues 561–620; that stretch reads FINDTKTYEGQLGTDNEIFLTKKMTEVCQATSQYYFQSGNEIHVYNDYHHFKTIELDGIA. Hydrophobic membrane proximal region stretches follow at residues 678–730 and 709–729; these read LDNA…SFFK and NLVS…ISFF. Residues 733-753 form a helical membrane-spanning segment; sequence FGGMLILVLVAGVVILVISLT. At 754 to 857 the chain is on the intravirion side; sequence RRTRQMSQQP…ALLGEAETEF (104 aa). A disordered region spans residues 832–857; that stretch reads FPGLRRRRYHDPETAAALLGEAETEF. Positions 845–857 are enriched in low complexity; it reads TAAALLGEAETEF.

It belongs to the herpesviridae glycoprotein B family. As to quaternary structure, homotrimer; disulfide-linked. Binds to heparan sulfate proteoglycans. Interacts with gH/gL heterodimer. Post-translationally, a proteolytic cleavage by host furin generates two subunits that remain linked by disulfide bonds.

The protein resides in the virion membrane. Its subcellular location is the host cell membrane. It localises to the host endosome membrane. It is found in the host Golgi apparatus membrane. In terms of biological role, envelope glycoprotein that forms spikes at the surface of virion envelope. Essential for the initial attachment to heparan sulfate moieties of the host cell surface proteoglycans. Involved in fusion of viral and cellular membranes leading to virus entry into the host cell. Following initial binding to its host receptors, membrane fusion is mediated by the fusion machinery composed at least of gB and the heterodimer gH/gL. May be involved in the fusion between the virion envelope and the outer nuclear membrane during virion egress. This is Envelope glycoprotein B from Epstein-Barr virus (strain B95-8) (HHV-4).